Here is a 149-residue protein sequence, read N- to C-terminus: L-alanine exporter AlaE (149 aa).

The next 4 membrane-spanning stretches (helical) occupy residues 16-36, 46-66, 85-105, and 112-132; these read FAMV…LSGM, LVAI…RDLI, VLAY…TVGA, and AAVS…GYFL.

It belongs to the AlaE exporter family.

Its subcellular location is the cell inner membrane. Functionally, exports L-alanine. The chain is L-alanine exporter AlaE from Salmonella arizonae (strain ATCC BAA-731 / CDC346-86 / RSK2980).